The primary structure comprises 163 residues: Transcription elongation factor GreA (163 aa).

A coiled-coil region spans residues 49-80; that stretch reads ENAEYDAARDRQSEVERRILELERILENAEII.

The protein belongs to the GreA/GreB family.

In terms of biological role, necessary for efficient RNA polymerase transcription elongation past template-encoded arresting sites. The arresting sites in DNA have the property of trapping a certain fraction of elongating RNA polymerases that pass through, resulting in locked ternary complexes. Cleavage of the nascent transcript by cleavage factors such as GreA or GreB allows the resumption of elongation from the new 3'terminus. GreA releases sequences of 2 to 3 nucleotides. The chain is Transcription elongation factor GreA from Mycoplasmopsis agalactiae (strain NCTC 10123 / CIP 59.7 / PG2) (Mycoplasma agalactiae).